The primary structure comprises 255 residues: Ribosomal RNA small subunit methyltransferase G (255 aa).

S-adenosyl-L-methionine-binding positions include G89, F94, 112–114, 140–141, and R159; these read DST and VE.

It belongs to the methyltransferase superfamily. RNA methyltransferase RsmG family.

The protein localises to the cytoplasm. Functionally, specifically methylates the N7 position of a guanine in 16S rRNA. This chain is Ribosomal RNA small subunit methyltransferase G, found in Trichodesmium erythraeum (strain IMS101).